The primary structure comprises 219 residues: Translation initiation factor 6 (219 aa).

This sequence belongs to the eIF-6 family.

Its function is as follows. Binds to the 50S ribosomal subunit and prevents its association with the 30S ribosomal subunit to form the 70S initiation complex. The chain is Translation initiation factor 6 from Methanosarcina mazei (strain ATCC BAA-159 / DSM 3647 / Goe1 / Go1 / JCM 11833 / OCM 88) (Methanosarcina frisia).